The sequence spans 133 residues: MSIFTKIINRELPGRFVYEDDDVVAFLTIEPMTQGHTLVVPRAEIDHWQNVDPALFGRVMSVSQLIGKAVCRAFSTQRAGMIIAGLEVPHLHIHVFPTRSLSDFGFANVDRNPSPGSLDEAQAKIRAALAQLA.

Residues 3–106 enclose the HIT domain; the sequence is IFTKIINREL…PTRSLSDFGF (104 aa). Positions 90–94 match the Histidine triad motif motif; sequence HLHIH.

This is an uncharacterized protein from Mycobacterium tuberculosis (strain ATCC 25618 / H37Rv).